The primary structure comprises 785 residues: Copal-8-ol diphosphate hydratase TPSSA3, chloroplastic (785 aa).

Arg-240 serves as a coordination point for substrate. Mg(2+) contacts are provided by Asp-372 and Asp-374. The DXDD motif signature appears at 372–375 (DIDD). Residue Arg-459 coordinates substrate.

This sequence belongs to the terpene synthase family. Mg(2+) is required as a cofactor.

It localises to the plastid. The protein localises to the chloroplast. It carries out the reaction (2E,6E,10E)-geranylgeranyl diphosphate + H2O = 8-hydroxycopalyl diphosphate. It functions in the pathway secondary metabolite biosynthesis; terpenoid biosynthesis. Functionally, involved in the biosynthesis of labdane-type diterpenoid including sclareol, a diterpene-diol that is used as fragrance and flavoring, and has anticancer effects (able to kill leukemic and colon cancer cells by apoptosis). Sclareol can also be used as synthesis precursor of ambergris substitution fragance products such as ambrox. Terpene synthase that produces 8-hydroxycopalyl diphosphate from geranylgeranyl diphosphate (GGPP). The chain is Copal-8-ol diphosphate hydratase TPSSA3, chloroplastic from Salvia sclarea (Clary sage).